The primary structure comprises 294 residues: tRNA pseudouridine synthase B (294 aa).

Catalysis depends on aspartate 39, which acts as the Nucleophile.

Belongs to the pseudouridine synthase TruB family. Type 1 subfamily.

It carries out the reaction uridine(55) in tRNA = pseudouridine(55) in tRNA. Functionally, responsible for synthesis of pseudouridine from uracil-55 in the psi GC loop of transfer RNAs. This Streptococcus pyogenes serotype M28 (strain MGAS6180) protein is tRNA pseudouridine synthase B.